The sequence spans 578 residues: Monooxygenase cfoE (578 aa).

A helical transmembrane segment spans residues 549–569; that stretch reads IVLSGVPLVVFGSLHLVLWIF.

Belongs to the FMO family. It depends on FAD as a cofactor.

Its subcellular location is the membrane. Its pathway is secondary metabolite biosynthesis; flavonoid biosynthesis. Its function is as follows. Monooxygenase; part of the gene cluster that mediates the biosynthesis of chlorflavonin, a fungal flavonoid with acetolactate synthase inhibitory activity. Within the pathway, cfoE is responsible for the chlorination of the flavonoid skeleton at position C3'. The pathway begins with the PKS-NRPS hybrid synthetase cfoA that uses benzoic acid or p-hydroxybenzoic acid as a starter unit with four rounds of chain elongation using malonyl-CoA to form the chalcone skeleton. Then, a new type of chalcone isomerase, cfoK, catalyzes the conversion of the chalcone into a flavanone by a histidine-mediated oxa-Michael addition mechanism. The desaturation of flavanone to flavone is catalyzed by a new type of flavone synthase, the flavin mononucleotide (FMN)-dependent oxidoreductase cfoJ. Monooxygenases cfoF, cfoG, and P450 cfoH are responsible for the hydroxylation of the flavonoid skeleton at sites C3, C8, and C2', respectively. Like cfoF, the dehydratase cfoI plays also a role in the hydroxylation of position C3. Methyltransferases cfoB, cfoC, and cfoD then catalyze the methylation of C7-OH, C8-OH, and C3-OH, respectively. Finally, the monooxygenase cfoE is responsible for the chlorination of flavonoid at position C3'. The polypeptide is Monooxygenase cfoE (Aspergillus candidus).